We begin with the raw amino-acid sequence, 170 residues long: MGVTKKPDLNDPVLRAKLAKGMGHNYYGEPAWPNDLLYIFPVVILGTIACNVGLAVLEPSMIGEPADPFATPLEILPEWYFFPVFQILRTVPNKLLGVLLMVSVPAGLLTVPFLENVNKFQNPFRRPVATTVFLIGTAVALWLGIGATLPIDKSLTLGLFQIQIDLEILR.

The next 3 helical transmembrane spans lie at 36 to 56 (LLYI…GLAV), 95 to 115 (LLGV…PFLE), and 131 to 151 (TVFL…TLPI).

This sequence belongs to the cytochrome b family. PetD subfamily. As to quaternary structure, the 4 large subunits of the cytochrome b6-f complex are cytochrome b6, subunit IV (17 kDa polypeptide, petD), cytochrome f and the Rieske protein, while the 4 small subunits are petG, petL, petM and petN. The complex functions as a dimer.

Its subcellular location is the plastid. It is found in the chloroplast thylakoid membrane. Its function is as follows. Component of the cytochrome b6-f complex, which mediates electron transfer between photosystem II (PSII) and photosystem I (PSI), cyclic electron flow around PSI, and state transitions. The polypeptide is Cytochrome b6-f complex subunit 4 (Nymphaea alba (White water-lily)).